Reading from the N-terminus, the 42-residue chain is Cytochrome b559 subunit beta (42 aa).

The chain crosses the membrane as a helical span at residues 17–33 (WLAIHGLAVPTVFFLGA). H21 is a heme binding site.

This sequence belongs to the PsbE/PsbF family. As to quaternary structure, heterodimer of an alpha subunit and a beta subunit. PSII is composed of 1 copy each of membrane proteins PsbA, PsbB, PsbC, PsbD, PsbE, PsbF, PsbH, PsbI, PsbJ, PsbK, PsbL, PsbM, PsbT, PsbX, PsbY, PsbZ, Psb30/Ycf12, at least 3 peripheral proteins of the oxygen-evolving complex and a large number of cofactors. It forms dimeric complexes. The cofactor is heme b.

The protein localises to the plastid. The protein resides in the chloroplast thylakoid membrane. In terms of biological role, this b-type cytochrome is tightly associated with the reaction center of photosystem II (PSII). PSII is a light-driven water:plastoquinone oxidoreductase that uses light energy to abstract electrons from H(2)O, generating O(2) and a proton gradient subsequently used for ATP formation. It consists of a core antenna complex that captures photons, and an electron transfer chain that converts photonic excitation into a charge separation. In Guillardia theta (Cryptophyte), this protein is Cytochrome b559 subunit beta.